The following is a 187-amino-acid chain: Cytochrome b-245 chaperone 1 (187 aa).

A helical transmembrane segment spans residues 20–42; it reads GIRSWSLLVGILSIGLAAAYYSG. Residue Ser168 is modified to Phosphoserine.

It belongs to the CYBC1 family. Interacts with CYBB; CYBC1 may act as a chaperone stabilizing Cytochrome b-245 heterodimer.

The protein resides in the endoplasmic reticulum membrane. Functionally, functions as a chaperone necessary for a stable expression of the CYBA and CYBB subunits of the cytochrome b-245 heterodimer. Controls the phagocyte respiratory burst and is essential for innate immunity. The polypeptide is Cytochrome b-245 chaperone 1 (Bos taurus (Bovine)).